The chain runs to 542 residues: ATP synthase subunit alpha (542 aa).

An ATP-binding site is contributed by 173–180 (GDRQTGKT). The disordered stretch occupies residues 518–542 (PLVEKKPDEKHTTPVEQEKIVAGEK). Residues 519–542 (LVEKKPDEKHTTPVEQEKIVAGEK) are compositionally biased toward basic and acidic residues.

This sequence belongs to the ATPase alpha/beta chains family. In terms of assembly, F-type ATPases have 2 components, CF(1) - the catalytic core - and CF(0) - the membrane proton channel. CF(1) has five subunits: alpha(3), beta(3), gamma(1), delta(1), epsilon(1). CF(0) has three main subunits: a(1), b(2) and c(9-12). The alpha and beta chains form an alternating ring which encloses part of the gamma chain. CF(1) is attached to CF(0) by a central stalk formed by the gamma and epsilon chains, while a peripheral stalk is formed by the delta and b chains.

It localises to the cell membrane. It carries out the reaction ATP + H2O + 4 H(+)(in) = ADP + phosphate + 5 H(+)(out). Produces ATP from ADP in the presence of a proton gradient across the membrane. The alpha chain is a regulatory subunit. The polypeptide is ATP synthase subunit alpha (Bifidobacterium adolescentis (strain ATCC 15703 / DSM 20083 / NCTC 11814 / E194a)).